The primary structure comprises 440 residues: Thymidine phosphorylase (440 aa).

Belongs to the thymidine/pyrimidine-nucleoside phosphorylase family. In terms of assembly, homodimer.

It carries out the reaction thymidine + phosphate = 2-deoxy-alpha-D-ribose 1-phosphate + thymine. It functions in the pathway pyrimidine metabolism; dTMP biosynthesis via salvage pathway; dTMP from thymine: step 1/2. In terms of biological role, the enzymes which catalyze the reversible phosphorolysis of pyrimidine nucleosides are involved in the degradation of these compounds and in their utilization as carbon and energy sources, or in the rescue of pyrimidine bases for nucleotide synthesis. This Escherichia coli (strain K12 / DH10B) protein is Thymidine phosphorylase.